A 379-amino-acid chain; its full sequence is Nematocin receptor 1 (379 aa).

The Extracellular segment spans residues 19-48 (HNLYLFQMLELQENITDSQPMDPPSLEIMM). The N-linked (GlcNAc...) asparagine glycan is linked to asparagine 32. The helical transmembrane segment at 49–69 (LHHLMIILVTLFGNTLLIYVI) threads the bilayer. The Cytoplasmic portion of the chain corresponds to 70–95 (YKNNAVLRRKRVTPVQMLMLHMCAAD). A helical membrane pass occupies residues 96-116 (ILFALISVGPTMAITATVPFF). At 117–124 (YGPNLLCK) the chain is on the extracellular side. A disulfide bond links cysteine 123 and cysteine 196. The chain crosses the membrane as a helical span at residues 125 to 145 (LTKFLQVIPMYASSFLLVAIS). Over 146–168 (ADRYQAICRPLASMKSSIYNRPA) the chain is Cytoplasmic. A helical membrane pass occupies residues 169–189 (LYSGIAWTAAILFSTPQLYLF). Topologically, residues 190 to 207 (EKRNGDCSENYTTALQYQ) are extracellular. Residue asparagine 199 is glycosylated (N-linked (GlcNAc...) asparagine). The helical transmembrane segment at 208–228 (LYVCLFNSVVWLLPSAIAGWL) threads the bilayer. Over 229-289 (YLCVCKAVWK…DRRRVQTVKL (61 aa)) the chain is Cytoplasmic. A helical transmembrane segment spans residues 290 to 310 (TLTIVAANFVLWAPFCITSVI). Residues 311-320 (DAVWPTAINS) lie on the Extracellular side of the membrane. Residue asparagine 319 is glycosylated (N-linked (GlcNAc...) asparagine). Residues 321–343 (TFATYIMFFGNLNSCMNPWLWFH) form a helical membrane-spanning segment. At 344–379 (FNRKQLKRACPCRKSSEPLIQSLVYVHVMTSEQSDF) the chain is on the cytoplasmic side.

This sequence belongs to the G-protein coupled receptor 1 family. Vasopressin/oxytocin receptor subfamily. In terms of tissue distribution, detected in the left ASE gustatory neuron, the chemosensory neuron pairs ASH and ADF, and the PQR tail neuron. In males, detected in hook and tail sensory neurons involved in vulval sensing and hermaphrodite contact, and in spicule protractor muscles.

It localises to the cell membrane. In terms of biological role, receptor for nematocin. The activity of this receptor is mediated by G proteins which activate a phosphatidylinositol-calcium second messenger system. The activity of this receptor may be modulated by ntr-2, leading to reduced intracellular cAMP production. Plays a role in gustatory associative learning. Also plays a role in male mating behavior. The sequence is that of Nematocin receptor 1 from Caenorhabditis elegans.